The following is a 114-amino-acid chain: Tyrosine-protein phosphatase 11 (114 aa).

Residues 1 to 114 (WRMIWEHNTR…EAKHTGPTIV (114 aa)) enclose the Tyrosine-protein phosphatase domain. D81 contributes to the substrate binding site.

It belongs to the protein-tyrosine phosphatase family.

It carries out the reaction O-phospho-L-tyrosyl-[protein] + H2O = L-tyrosyl-[protein] + phosphate. This is Tyrosine-protein phosphatase 11 (STY-11) from Styela plicata (Wrinkled sea squirt).